Consider the following 108-residue polypeptide: X antigen family member 5 (108 aa).

Residues 20–108 are disordered; it reads VGPMLEPSVP…PEGGEGKPQL (89 aa). 2 stretches are compositionally biased toward basic and acidic residues: residues 40–52 and 94–108; these read SQDH…REDD and EQFK…KPQL.

Belongs to the GAGE family.

The chain is X antigen family member 5 (XAGE5) from Homo sapiens (Human).